A 62-amino-acid chain; its full sequence is Photosystem II reaction center protein H (62 aa).

Residues 30–50 form a helical membrane-spanning segment; the sequence is PVMAGIGFMLLIFLVTILQIY.

This sequence belongs to the PsbH family. As to quaternary structure, PSII is composed of 1 copy each of membrane proteins PsbA, PsbB, PsbC, PsbD, PsbE, PsbF, PsbH, PsbI, PsbJ, PsbK, PsbL, PsbM, PsbT, PsbX, PsbY, Psb30/Ycf12, peripheral proteins PsbO, CyanoQ (PsbQ), PsbU, PsbV and a large number of cofactors. It forms dimeric complexes.

Its subcellular location is the cellular thylakoid membrane. Its function is as follows. One of the components of the core complex of photosystem II (PSII), required for its stability and/or assembly. PSII is a light-driven water:plastoquinone oxidoreductase that uses light energy to abstract electrons from H(2)O, generating O(2) and a proton gradient subsequently used for ATP formation. It consists of a core antenna complex that captures photons, and an electron transfer chain that converts photonic excitation into a charge separation. The protein is Photosystem II reaction center protein H of Prochlorococcus marinus (strain MIT 9303).